Reading from the N-terminus, the 221-residue chain is Protein-L-isoaspartate O-methyltransferase (221 aa).

The active site involves serine 68.

It belongs to the methyltransferase superfamily. L-isoaspartyl/D-aspartyl protein methyltransferase family.

The protein resides in the cytoplasm. The enzyme catalyses [protein]-L-isoaspartate + S-adenosyl-L-methionine = [protein]-L-isoaspartate alpha-methyl ester + S-adenosyl-L-homocysteine. In terms of biological role, catalyzes the methyl esterification of L-isoaspartyl residues in peptides and proteins that result from spontaneous decomposition of normal L-aspartyl and L-asparaginyl residues. It plays a role in the repair and/or degradation of damaged proteins. In Desulfosudis oleivorans (strain DSM 6200 / JCM 39069 / Hxd3) (Desulfococcus oleovorans), this protein is Protein-L-isoaspartate O-methyltransferase.